The chain runs to 505 residues: Poxin-Schlafen (505 aa).

The segment at 1 to 238 (MAMFYAHAFG…SKEERVDYVL (238 aa)) is poxin-like. The Proton donor role is filled by H17. Catalysis depends on Y138, which acts as the Shared with catalytic histidine of dimeric partner. K142 acts as the Proton acceptor; shared with catalytic histidine of dimeric partner in catalysis. The schlafen-like stretch occupies residues 239–505 (MKRLESIRHL…PDEWVSHIKF (267 aa)).

In the N-terminal section; belongs to the poxin family. It in the C-terminal section; belongs to the Schlafen protein family. Subgroup poxviridae B3 subfamily. As to quaternary structure, homodimer.

The enzyme catalyses 2',3'-cGAMP + H2O = Gp(2'-5')Ap(3') + H(+). Nuclease that is responsible for viral evasion of host cGAS-STING innate immunity. Cleaves 2',3'-cGAMP which is produced by host cGAS following recognition of cytosolic DNA and blocks the subsequent 2',3'-cGAMP-mediated activation of TMEM173/STING, which normally spreads to adjacent cells and activates the interferon and NF-kappa-B immune responses. The protein is Poxin-Schlafen (OPG188) of Bos taurus (Bovine).